Here is a 156-residue protein sequence, read N- to C-terminus: Snaclec subunit B (156 aa).

The N-terminal stretch at 1 to 23 (MGRSIFVNLGLLVVAFSLRGSEA) is a signal peptide. 3 disulfides stabilise this stretch: Cys25–Cys36, Cys53–Cys144, and Cys119–Cys136. The region spanning 32 to 145 (YDKYCYKVFD…CKSTLPFTCK (114 aa)) is the C-type lectin domain.

This sequence belongs to the snaclec family. Heterodimer of subunits A and B; disulfide-linked. As to expression, expressed by the venom gland.

The protein resides in the secreted. Functionally, interferes with one step of hemostasis (modulation of platelet aggregation, or coagulation cascade, for example). This is Snaclec subunit B from Philodryas olfersii (Green snake).